Reading from the N-terminus, the 323-residue chain is Beta-ketoacyl-[acyl-carrier-protein] synthase III (323 aa).

Active-site residues include Cys113 and His250. An ACP-binding region spans residues 251–255 (QANKR). Asn280 is an active-site residue.

The protein belongs to the thiolase-like superfamily. FabH family. Homodimer.

It localises to the cytoplasm. The catalysed reaction is malonyl-[ACP] + acetyl-CoA + H(+) = 3-oxobutanoyl-[ACP] + CO2 + CoA. It participates in lipid metabolism; fatty acid biosynthesis. Its function is as follows. Catalyzes the condensation reaction of fatty acid synthesis by the addition to an acyl acceptor of two carbons from malonyl-ACP. Catalyzes the first condensation reaction which initiates fatty acid synthesis and may therefore play a role in governing the total rate of fatty acid production. Possesses both acetoacetyl-ACP synthase and acetyl transacylase activities. Its substrate specificity determines the biosynthesis of branched-chain and/or straight-chain of fatty acids. The sequence is that of Beta-ketoacyl-[acyl-carrier-protein] synthase III from Agrobacterium fabrum (strain C58 / ATCC 33970) (Agrobacterium tumefaciens (strain C58)).